Reading from the N-terminus, the 427-residue chain is Glutamate-1-semialdehyde 2,1-aminomutase (427 aa).

N6-(pyridoxal phosphate)lysine is present on Lys265.

The protein belongs to the class-III pyridoxal-phosphate-dependent aminotransferase family. HemL subfamily. As to quaternary structure, homodimer. Pyridoxal 5'-phosphate is required as a cofactor.

It is found in the cytoplasm. The catalysed reaction is (S)-4-amino-5-oxopentanoate = 5-aminolevulinate. It participates in porphyrin-containing compound metabolism; protoporphyrin-IX biosynthesis; 5-aminolevulinate from L-glutamyl-tRNA(Glu): step 2/2. This is Glutamate-1-semialdehyde 2,1-aminomutase from Colwellia psychrerythraea (strain 34H / ATCC BAA-681) (Vibrio psychroerythus).